The primary structure comprises 244 residues: DNA repair protein RecO (244 aa).

It belongs to the RecO family.

Involved in DNA repair and RecF pathway recombination. This chain is DNA repair protein RecO, found in Geobacter metallireducens (strain ATCC 53774 / DSM 7210 / GS-15).